The chain runs to 325 residues: tRNA U34 carboxymethyltransferase (325 aa).

Residues K91, W105, K110, G130, 152–154 (DPS), M196, Y200, and R315 each bind carboxy-S-adenosyl-L-methionine.

It belongs to the class I-like SAM-binding methyltransferase superfamily. CmoB family. In terms of assembly, homotetramer.

The enzyme catalyses carboxy-S-adenosyl-L-methionine + 5-hydroxyuridine(34) in tRNA = 5-carboxymethoxyuridine(34) in tRNA + S-adenosyl-L-homocysteine + H(+). Catalyzes carboxymethyl transfer from carboxy-S-adenosyl-L-methionine (Cx-SAM) to 5-hydroxyuridine (ho5U) to form 5-carboxymethoxyuridine (cmo5U) at position 34 in tRNAs. In Aeromonas salmonicida (strain A449), this protein is tRNA U34 carboxymethyltransferase.